A 401-amino-acid chain; its full sequence is Argininosuccinate synthase (401 aa).

ATP is bound by residues 10 to 18 and Ala37; that span reads AYSGGLDTS. Tyr89 provides a ligand contact to L-citrulline. Gly119 serves as a coordination point for ATP. Residues Thr121, Asn125, and Asp126 each coordinate L-aspartate. Asn125 is an L-citrulline binding site. Arg129, Ser178, Ser187, Glu263, and Tyr275 together coordinate L-citrulline.

This sequence belongs to the argininosuccinate synthase family. Type 1 subfamily. In terms of assembly, homotetramer.

The protein resides in the cytoplasm. The enzyme catalyses L-citrulline + L-aspartate + ATP = 2-(N(omega)-L-arginino)succinate + AMP + diphosphate + H(+). Its pathway is amino-acid biosynthesis; L-arginine biosynthesis; L-arginine from L-ornithine and carbamoyl phosphate: step 2/3. This is Argininosuccinate synthase from Buchnera aphidicola subsp. Schizaphis graminum (strain Sg).